We begin with the raw amino-acid sequence, 420 residues long: Calreticulin (420 aa).

A signal peptide spans 1–25 (MAIRKGSSYAVAALLALASVAAVAG). Residue asparagine 57 is glycosylated (N-linked (GlcNAc...) asparagine). An alpha-D-glucoside-binding residues include tyrosine 115, lysine 117, tyrosine 134, and aspartate 141. Repeat copies occupy residues 197-208 (KHTGSIYEHWDI), 216-227 (DPEAKKPEDWDD), 233-244 (DPEDKKPEGYDD), 251-262 (DPDAKKPEDWDD), 266-276 (GEWTAPTIPNP), 280-290 (GPWKQKKIKNP), and 294-304 (GKWKAPMIDNP). Positions 197-262 (KHTGSIYEHW…DAKKPEDWDD (66 aa)) are 4 X approximate repeats. Over residues 213–258 (KIKDPEAKKPEDWDDKEYIPDPEDKKPEGYDDIPKEIPDPDAKKPE) the composition is skewed to basic and acidic residues. The segment at 213–285 (KIKDPEAKKP…PEYKGPWKQK (73 aa)) is disordered. The segment at 266 to 304 (GEWTAPTIPNPEYKGPWKQKKIKNPNYQGKWKAPMIDNP) is 3 X approximate repeats. Glutamate 324 serves as a coordination point for an alpha-D-glucoside. Basic and acidic residues predominate over residues 355–381 (GKHKEAEKAAFDEAEKKKEEEDAAKGG). The interval 355-420 (GKHKEAEKAA…DSDDEKHDEL (66 aa)) is disordered. The segment covering 382 to 402 (DDEDDDLEDEEDDEKADEDKA) has biased composition (acidic residues). Positions 403–420 (DSDAEDGKDSDDEKHDEL) are enriched in basic and acidic residues. A Prevents secretion from ER motif is present at residues 417-420 (HDEL).

This sequence belongs to the calreticulin family.

Its subcellular location is the endoplasmic reticulum lumen. In terms of biological role, molecular calcium-binding chaperone promoting folding, oligomeric assembly and quality control in the ER via the calreticulin/calnexin cycle. This lectin may interact transiently with almost all of the monoglucosylated glycoproteins that are synthesized in the ER. This chain is Calreticulin (CRT), found in Zea mays (Maize).